Consider the following 344-residue polypeptide: MLSDRQLLILKIIVDDFIRSGQPVGSRTLSKKEQITFSSATIRNEMADLEELGFIEKTHISSGRVPSQKGYRYYVDHLLPPVRLTQKDVQTIQSIFHEQIYELEKLIQKSAQILSDLTNYTTVVLGPSVKEHKLKTIQIIPLNAETAVAIIVTDTGYVEKHVVTLPPSIPPSDVEKMVNILNERLTGVPLEDLTDKIQTEVAHVLREHIQSYDHMLRMISSSLDLNAPAQMFLSGKMNMLRQPEFSDIDKLRGLFNIIEQEKEFYRLLRKHNQQGIQVKIGTENDVEGMENCSLITATYSVGGEKLGTIAVLGPTRMEYSRVISLLNLVATDLSKALTMWYQKD.

Belongs to the HrcA family.

Negative regulator of class I heat shock genes (grpE-dnaK-dnaJ and groELS operons). Prevents heat-shock induction of these operons. The protein is Heat-inducible transcription repressor HrcA of Anoxybacillus flavithermus (strain DSM 21510 / WK1).